The primary structure comprises 429 residues: UDP-N-acetylglucosamine 1-carboxyvinyltransferase (429 aa).

Residue 22–23 participates in phosphoenolpyruvate binding; sequence KN. Arg-102 is a UDP-N-acetyl-alpha-D-glucosamine binding site. Catalysis depends on Cys-126, which acts as the Proton donor. Cys-126 is subject to 2-(S-cysteinyl)pyruvic acid O-phosphothioketal. Residues 131–135, Asp-316, and Ile-338 contribute to the UDP-N-acetyl-alpha-D-glucosamine site; that span reads RPVDL.

Belongs to the EPSP synthase family. MurA subfamily.

It is found in the cytoplasm. The catalysed reaction is phosphoenolpyruvate + UDP-N-acetyl-alpha-D-glucosamine = UDP-N-acetyl-3-O-(1-carboxyvinyl)-alpha-D-glucosamine + phosphate. It functions in the pathway cell wall biogenesis; peptidoglycan biosynthesis. In terms of biological role, cell wall formation. Adds enolpyruvyl to UDP-N-acetylglucosamine. This is UDP-N-acetylglucosamine 1-carboxyvinyltransferase from Methylocella silvestris (strain DSM 15510 / CIP 108128 / LMG 27833 / NCIMB 13906 / BL2).